Here is a 304-residue protein sequence, read N- to C-terminus: Ribonuclease Z (304 aa).

Zn(2+) is bound by residues histidine 63, histidine 65, aspartate 67, histidine 68, histidine 141, aspartate 208, and histidine 266. Aspartate 67 acts as the Proton acceptor in catalysis.

This sequence belongs to the RNase Z family. Homodimer. Requires Zn(2+) as cofactor.

The enzyme catalyses Endonucleolytic cleavage of RNA, removing extra 3' nucleotides from tRNA precursor, generating 3' termini of tRNAs. A 3'-hydroxy group is left at the tRNA terminus and a 5'-phosphoryl group is left at the trailer molecule.. Its function is as follows. Zinc phosphodiesterase, which displays some tRNA 3'-processing endonuclease activity. Probably involved in tRNA maturation, by removing a 3'-trailer from precursor tRNA. The polypeptide is Ribonuclease Z (Chlamydia trachomatis serovar D (strain ATCC VR-885 / DSM 19411 / UW-3/Cx)).